Consider the following 34-residue polypeptide: Cytochrome b6-f complex subunit 7 (34 aa).

The chain crosses the membrane as a helical span at residues 9-29 (ALLSFGLIFVGWALGALLLKI).

The protein belongs to the PetM family. In terms of assembly, the 4 large subunits of the cytochrome b6-f complex are cytochrome b6, subunit IV (17 kDa polypeptide, PetD), cytochrome f and the Rieske protein, while the 4 small subunits are PetG, PetL, PetM and PetN. The complex functions as a dimer.

It localises to the cellular thylakoid membrane. Component of the cytochrome b6-f complex, which mediates electron transfer between photosystem II (PSII) and photosystem I (PSI), cyclic electron flow around PSI, and state transitions. In Nostoc sp. (strain PCC 7120 / SAG 25.82 / UTEX 2576), this protein is Cytochrome b6-f complex subunit 7.